The chain runs to 941 residues: Ankyrin repeat and MYND domain-containing protein 1 (941 aa).

MORN repeat units follow at residues 2-24, 25-47, and 70-92; these read YQGE…TGES, YHGQ…DGSS, and FQGL…DGSQ. ANK repeat units follow at residues 292–321, 513–542, 545–574, 581–613, 657–691, 694–723, and 737–766; these read KGYT…DVNK, MRRM…DPNL, VPMQ…RTDI, STLT…DVDA, GGRT…NPNL, SGHS…DPNL, and CDLT…DILK. Cys-880, Cys-883, Cys-894, Cys-897, Cys-903, Cys-907, His-916, and Cys-920 together coordinate Zn(2+). The MYND-type zinc finger occupies 880-920; sequence CYQCGRSIGVRLLPCPRCYGILTCSKYCKTKAWTEFHKKDC.

In Homo sapiens (Human), this protein is Ankyrin repeat and MYND domain-containing protein 1 (ANKMY1).